The following is a 28-amino-acid chain: HSDAVFTDNYSRIRKQMAVKKYINSLLA.

Position 28 is an alanine amide (Ala-28).

The protein belongs to the glucagon family.

It localises to the secreted. In terms of biological role, VIP is a neuropeptide involved in a diverse array of physiological processes through activating the PACAP subfamily of class B1 G protein-coupled receptors: VIP receptor 1 (VPR1) and VIP receptor 2 (VPR2). Abundantly expressed throughout the CNS and peripheral nervous systems where they primarily exert neuroprotective and immune modulatory roles. Also causes vasodilation, lowers arterial blood pressure, stimulates myocardial contractility, increases glycogenolysis and relaxes the smooth muscle of trachea, stomach and gall bladder. The protein is Vasoactive intestinal peptide (vip) of Scyliorhinus canicula (Small-spotted catshark).